The chain runs to 295 residues: GATA zinc finger domain-containing protein 23 (295 aa).

Low complexity predominate over residues alanine 115 to valine 126. Residues alanine 115–proline 240 are disordered. Positions isoleucine 127 to leucine 145 are enriched in polar residues. Low complexity predominate over residues threonine 146–lysine 163. Residues arginine 164–lysine 174 show a composition bias toward basic residues. Positions serine 181–glutamate 227 are enriched in low complexity. The segment at residues threonine 229–aspartate 241 is a DNA-binding region (a.T hook). The GATA-type zinc-finger motif lies at cysteine 243–cysteine 270.

In Dictyostelium discoideum (Social amoeba), this protein is GATA zinc finger domain-containing protein 23 (gtaW).